Here is a 216-residue protein sequence, read N- to C-terminus: Nudix hydrolase 26, chloroplastic (216 aa).

Residues 1-53 (MALYRPLLLHHPTSPSVTTFLRNYPSKPIKFSSLPFLHRCRKSRVSSSSARCC) constitute a chloroplast transit peptide. A Nudix hydrolase domain is found at 62 to 209 (GYRRNVGVCL…KKPVYKEVMS (148 aa)). Residues 95–116 (GGIDEGEDPRVAVMRELKEETG) carry the Nudix box motif. Residues Glu-110 and Glu-114 each coordinate Mn(2+).

The protein belongs to the Nudix hydrolase family. It depends on Mg(2+) as a cofactor. The cofactor is Mn(2+). In terms of tissue distribution, expressed in roots, leaves, stems and inflorescences.

The protein localises to the plastid. The protein resides in the chloroplast. Mediates the hydrolysis of some nucleoside diphosphate derivatives. Can use diadenosine 5',5'''-P(1)P(5) pentaphosphate (Ap(5)A), diadenosine 5',5'''-P(1)P(4) tetraphosphate (Ap(4)A) and diadenosine 5',5'''-P(1)P(3) triphosphate (Ap(3)A) as substrates. This is Nudix hydrolase 26, chloroplastic (NUDT26) from Arabidopsis thaliana (Mouse-ear cress).